The following is an 86-amino-acid chain: Large ribosomal subunit protein bL31 (86 aa).

The segment at 65 to 86 is disordered; it reads YGMGSANSATSKEQKEEKDSNK. The segment covering 76–86 has biased composition (basic and acidic residues); the sequence is KEQKEEKDSNK.

Belongs to the bacterial ribosomal protein bL31 family. Type A subfamily. Part of the 50S ribosomal subunit.

Its function is as follows. Binds the 23S rRNA. This is Large ribosomal subunit protein bL31 from Prochlorococcus marinus (strain MIT 9312).